A 132-amino-acid chain; its full sequence is Ribosome-binding factor A (132 aa).

The protein belongs to the RbfA family. In terms of assembly, monomer. Binds 30S ribosomal subunits, but not 50S ribosomal subunits or 70S ribosomes.

Its subcellular location is the cytoplasm. Functionally, one of several proteins that assist in the late maturation steps of the functional core of the 30S ribosomal subunit. Associates with free 30S ribosomal subunits (but not with 30S subunits that are part of 70S ribosomes or polysomes). Required for efficient processing of 16S rRNA. May interact with the 5'-terminal helix region of 16S rRNA. This Pseudomonas putida (strain ATCC 700007 / DSM 6899 / JCM 31910 / BCRC 17059 / LMG 24140 / F1) protein is Ribosome-binding factor A.